The chain runs to 309 residues: Homoserine kinase (309 aa).

Residue 91–101 participates in ATP binding; that stretch reads PIGSGLGSSAC.

This sequence belongs to the GHMP kinase family. Homoserine kinase subfamily.

Its subcellular location is the cytoplasm. The catalysed reaction is L-homoserine + ATP = O-phospho-L-homoserine + ADP + H(+). The protein operates within amino-acid biosynthesis; L-threonine biosynthesis; L-threonine from L-aspartate: step 4/5. Catalyzes the ATP-dependent phosphorylation of L-homoserine to L-homoserine phosphate. The protein is Homoserine kinase of Photorhabdus laumondii subsp. laumondii (strain DSM 15139 / CIP 105565 / TT01) (Photorhabdus luminescens subsp. laumondii).